The following is a 353-amino-acid chain: Photosystem II protein D1 (353 aa).

T2 bears the N-acetylthreonine mark. T2 is subject to Phosphothreonine. The next 3 membrane-spanning stretches (helical) occupy residues 29 to 46, 118 to 133, and 142 to 156; these read YIGWFGVLMIPTLLTATS, HFLLGVACYMGREWEL, and WIAVAYSAPVAAATA. H118 contributes to the chlorophyll a binding site. A pheophytin a-binding site is contributed by Y126. [CaMn4O5] cluster contacts are provided by D170 and E189. A helical membrane pass occupies residues 197-218; it reads FHMLGVAGVFGGSLFSAMHGSL. H198 is a chlorophyll a binding site. A quinone-binding positions include H215 and 264–265; that span reads SF. Position 215 (H215) interacts with Fe cation. H272 contributes to the Fe cation binding site. The chain crosses the membrane as a helical span at residues 274–288; sequence FLAAWPVVGIWFTAL. [CaMn4O5] cluster is bound by residues H332, E333, D342, and A344. Positions 345–353 are excised as a propeptide; it reads AVEAPAVNG.

This sequence belongs to the reaction center PufL/M/PsbA/D family. In terms of assembly, PSII is composed of 1 copy each of membrane proteins PsbA, PsbB, PsbC, PsbD, PsbE, PsbF, PsbH, PsbI, PsbJ, PsbK, PsbL, PsbM, PsbT, PsbX, PsbY, PsbZ, Psb30/Ycf12, at least 3 peripheral proteins of the oxygen-evolving complex and a large number of cofactors. It forms dimeric complexes. The D1/D2 heterodimer binds P680, chlorophylls that are the primary electron donor of PSII, and subsequent electron acceptors. It shares a non-heme iron and each subunit binds pheophytin, quinone, additional chlorophylls, carotenoids and lipids. D1 provides most of the ligands for the Mn4-Ca-O5 cluster of the oxygen-evolving complex (OEC). There is also a Cl(-1) ion associated with D1 and D2, which is required for oxygen evolution. The PSII complex binds additional chlorophylls, carotenoids and specific lipids. serves as cofactor. In terms of processing, tyr-161 forms a radical intermediate that is referred to as redox-active TyrZ, YZ or Y-Z. Post-translationally, C-terminally processed by CTPA; processing is essential to allow assembly of the oxygen-evolving complex and thus photosynthetic growth.

Its subcellular location is the plastid. The protein localises to the chloroplast thylakoid membrane. It carries out the reaction 2 a plastoquinone + 4 hnu + 2 H2O = 2 a plastoquinol + O2. Its function is as follows. Photosystem II (PSII) is a light-driven water:plastoquinone oxidoreductase that uses light energy to abstract electrons from H(2)O, generating O(2) and a proton gradient subsequently used for ATP formation. It consists of a core antenna complex that captures photons, and an electron transfer chain that converts photonic excitation into a charge separation. The D1/D2 (PsbA/PsbD) reaction center heterodimer binds P680, the primary electron donor of PSII as well as several subsequent electron acceptors. In Conocephalum conicum (Snakeskin liverwort), this protein is Photosystem II protein D1.